Reading from the N-terminus, the 631-residue chain is UvrABC system protein C (631 aa).

A GIY-YIG domain is found at 26–105; that stretch reads SSPGVYQFKN…IKELKPRYNV (80 aa). In terms of domain architecture, UVR spans 219 to 254; that stretch reads SATIRSLNERMLSFAKELKFEQAAELKTQIDSLKRY.

The protein belongs to the UvrC family. As to quaternary structure, interacts with UvrB in an incision complex.

The protein localises to the cytoplasm. Its function is as follows. The UvrABC repair system catalyzes the recognition and processing of DNA lesions. UvrC both incises the 5' and 3' sides of the lesion. The N-terminal half is responsible for the 3' incision and the C-terminal half is responsible for the 5' incision. The polypeptide is UvrABC system protein C (Chlorobium phaeobacteroides (strain DSM 266 / SMG 266 / 2430)).